The following is a 218-amino-acid chain: 3,4-dihydroxy-2-butanone 4-phosphate synthase (218 aa).

D-ribulose 5-phosphate-binding positions include arginine 38–glutamate 39, aspartate 43, arginine 151–threonine 155, and glutamate 175. Glutamate 39 lines the Mg(2+) pocket. Mg(2+) is bound at residue histidine 154.

The protein belongs to the DHBP synthase family. Homodimer. It depends on Mg(2+) as a cofactor. Requires Mn(2+) as cofactor.

The enzyme catalyses D-ribulose 5-phosphate = (2S)-2-hydroxy-3-oxobutyl phosphate + formate + H(+). It functions in the pathway cofactor biosynthesis; riboflavin biosynthesis; 2-hydroxy-3-oxobutyl phosphate from D-ribulose 5-phosphate: step 1/1. Its function is as follows. Catalyzes the conversion of D-ribulose 5-phosphate to formate and 3,4-dihydroxy-2-butanone 4-phosphate. The protein is 3,4-dihydroxy-2-butanone 4-phosphate synthase of Vibrio atlanticus (strain LGP32) (Vibrio splendidus (strain Mel32)).